We begin with the raw amino-acid sequence, 265 residues long: Mlc titration factor A (265 aa).

Zn(2+)-binding residues include H111, H148, H152, and E211.

The protein belongs to the MtfA family. As to quaternary structure, interacts with Mlc. It depends on Zn(2+) as a cofactor.

It localises to the cytoplasm. Functionally, involved in the modulation of the activity of the glucose-phosphotransferase system (glucose-PTS). Interacts with the transcriptional repressor Mlc, preventing its interaction with DNA and leading to the modulation of expression of genes regulated by Mlc, including ptsG, which encodes the PTS system glucose-specific EIICB component. In terms of biological role, shows zinc-dependent metallopeptidase activity. This is Mlc titration factor A from Salmonella paratyphi A (strain AKU_12601).